Here is a 258-residue protein sequence, read N- to C-terminus: MVLIRVLANLLILQLSYAQKSSELVIGGDECNINEHRFLALVFNSSGFLCSGTLINQEWVLTAAHCDMENMRIYLGVHNESVQYDDEQTRVPEEKFFCLRSNNDTKWDKDIMLIRLDSPVNNSAHIAPLNLPFNPPMLGSVCRIMGWGAITSPNEIYPDVPHCANINLLHYSMCQAVYPGMPAQSRILCAGIQTGGIDTCSGDSGGPLICNGQFQGILHAGGNPCALPRAPGLYTRVFDYTDWIENIIAGNTDASCPP.

A signal peptide spans 1 to 18 (MVLIRVLANLLILQLSYA). The propeptide occupies 19-24 (QKSSEL). The 225-residue stretch at 25–249 (VIGGDECNIN…YTDWIENIIA (225 aa)) folds into the Peptidase S1 domain. 6 cysteine pairs are disulfide-bonded: C31/C163, C50/C66, C98/C256, C142/C210, C174/C189, and C200/C225. Residue N44 is glycosylated (N-linked (GlcNAc...) asparagine). H65 (charge relay system) is an active-site residue. N79 and N103 each carry an N-linked (GlcNAc...) asparagine glycan. The Charge relay system role is filled by D110. N121 carries an N-linked (GlcNAc...) asparagine glycan. The active-site Charge relay system is S204.

Belongs to the peptidase S1 family. Snake venom subfamily. Monomer. As to expression, expressed by the venom gland.

The protein resides in the secreted. Functionally, snake venom serine protease that may act in the hemostasis system of the prey. This is Snake venom serine protease PTLE1 from Gloydius halys (Chinese water mocassin).